The primary structure comprises 280 residues: Cell division protein SepF (280 aa).

A disordered region spans residues 22 to 117 (DYVDDRAPRA…DDYPEDAYGE (96 aa)). Composition is skewed to basic and acidic residues over residues 25–36 (DDRAPRASERGG) and 53–83 (RYGE…GADR).

It belongs to the SepF family. In terms of assembly, homodimer. Interacts with FtsZ.

The protein localises to the cytoplasm. Its function is as follows. Cell division protein that is part of the divisome complex and is recruited early to the Z-ring. Probably stimulates Z-ring formation, perhaps through the cross-linking of FtsZ protofilaments. Its function overlaps with FtsA. The protein is Cell division protein SepF of Nocardia farcinica (strain IFM 10152).